A 320-amino-acid chain; its full sequence is Ferrochelatase (320 aa).

Fe cation-binding residues include histidine 194 and glutamate 275.

The protein belongs to the ferrochelatase family.

It localises to the cytoplasm. The enzyme catalyses heme b + 2 H(+) = protoporphyrin IX + Fe(2+). Its pathway is porphyrin-containing compound metabolism; protoheme biosynthesis; protoheme from protoporphyrin-IX: step 1/1. In terms of biological role, catalyzes the ferrous insertion into protoporphyrin IX. In Serratia proteamaculans (strain 568), this protein is Ferrochelatase.